Consider the following 1389-residue polypeptide: DNA-directed RNA polymerase subunit beta' (1389 aa).

Residues C73, C75, C88, and C91 each coordinate Zn(2+). The Mg(2+) site is built by D464, D466, and D468. The Zn(2+) site is built by C810, C884, C891, and C894.

Belongs to the RNA polymerase beta' chain family. The RNAP catalytic core consists of 2 alpha, 1 beta, 1 beta' and 1 omega subunit. When a sigma factor is associated with the core the holoenzyme is formed, which can initiate transcription. Mg(2+) is required as a cofactor. Zn(2+) serves as cofactor.

It carries out the reaction RNA(n) + a ribonucleoside 5'-triphosphate = RNA(n+1) + diphosphate. Its function is as follows. DNA-dependent RNA polymerase catalyzes the transcription of DNA into RNA using the four ribonucleoside triphosphates as substrates. The protein is DNA-directed RNA polymerase subunit beta' of Pelagibacter ubique (strain HTCC1062).